The chain runs to 366 residues: Cyclic amide hydrolase (366 aa).

The tract at residues 1–103 is RU A; that stretch reads MKVGVHKLAM…TLFTRAPDDG (103 aa). Substrate is bound by residues Arg-51 and 82 to 83; that span reads SG. Residues 110–247 are RU B; sequence RLALGIGITR…CEVLLFGNAP (138 aa). Lys-160 is a catalytic residue. Substrate is bound by residues Arg-192, 230-231, Arg-327, and 346-347; these read SA and SG. Ser-230 acts as the Nucleophile in catalysis. The tract at residues 253–366 is RU C; it reads FRIGHGVLKD…AAPIAAIVRA (114 aa).

This sequence belongs to the cyclic amide hydrolase (CyAH) family. Homotetramer.

Cyclic amide hydrolase of unknown substrate specificity. Catalyzes the hydrolytic ring-opening of a cyclic amide. Does not act on cyanuric acid nor barbituric acid. The chain is Cyclic amide hydrolase from Azorhizobium caulinodans (strain ATCC 43989 / DSM 5975 / JCM 20966 / LMG 6465 / NBRC 14845 / NCIMB 13405 / ORS 571).